We begin with the raw amino-acid sequence, 334 residues long: L-lactate dehydrogenase C chain (334 aa).

Residues 30-58 (GQVG…VEDK) and Arg-100 each bind NAD(+). 3 residues coordinate substrate: Arg-107, Asn-139, and Arg-170. Asn-139 lines the NAD(+) pocket. His-194 serves as the catalytic Proton acceptor. Thr-249 contributes to the substrate binding site.

It belongs to the LDH/MDH superfamily. LDH family. Homotetramer. In terms of tissue distribution, eye and liver.

The protein resides in the cytoplasm. The enzyme catalyses (S)-lactate + NAD(+) = pyruvate + NADH + H(+). It participates in fermentation; pyruvate fermentation to lactate; (S)-lactate from pyruvate: step 1/1. The polypeptide is L-lactate dehydrogenase C chain (ldhc) (Fundulus heteroclitus (Killifish)).